The sequence spans 856 residues: Dual specificity protein kinase TTK (856 aa).

N-acetylmethionine is present on methionine 1. Serine 7 is subject to Phosphoserine. Phosphothreonine is present on threonine 33. Serine 37, serine 80, serine 281, serine 317, and serine 321 each carry phosphoserine. At threonine 360 the chain carries Phosphothreonine. Serine 363 is modified (phosphoserine). The interval 369-392 (EETKEYQEPEVPESNQKQWQSKRK) is disordered. A phosphoserine mark is found at serine 393, serine 435, and serine 454. One can recognise a Protein kinase domain in the interval 524-790 (YSILKQIGSG…IPELLAHPYV (267 aa)). ATP is bound by residues 530-538 (IGSGGSSKV) and lysine 552. Aspartate 646 serves as the catalytic Proton acceptor. Serine 820 carries the post-translational modification Phosphoserine. Low complexity predominate over residues 835-846 (YSGGESHNSSSS). The segment at 835–856 (YSGGESHNSSSSKTFGKKREKK) is disordered.

Belongs to the protein kinase superfamily. Ser/Thr protein kinase family. Interacts with TPR; the interactions occurs in a microtubule-independent manner. Interacts with MAD1L1 and MAD2L1.

It carries out the reaction L-seryl-[protein] + ATP = O-phospho-L-seryl-[protein] + ADP + H(+). It catalyses the reaction L-threonyl-[protein] + ATP = O-phospho-L-threonyl-[protein] + ADP + H(+). The enzyme catalyses L-tyrosyl-[protein] + ATP = O-phospho-L-tyrosyl-[protein] + ADP + H(+). With respect to regulation, inhibited by the ATP-competitive kinase inhibitor, SP600125. In terms of biological role, involved in mitotic spindle assembly checkpoint signaling, a process that delays anaphase until chromosomes are bioriented on the spindle, and in the repair of incorrect mitotic kinetochore-spindle microtubule attachments. Phosphorylates MAD1L1 to promote the mitotic spindle assembly checkpoint. Phosphorylates CDCA8/Borealin leading to enhanced AURKB activity at the kinetochore. Phosphorylates SKA3 at 'Ser-34' leading to dissociation of the SKA complex from microtubules and destabilization of microtubule-kinetochore attachments. Phosphorylates KNL1, KNTC1 and autophosphorylates. Phosphorylates MCRS1 which enhances recruitment of KIF2A to the minus end of spindle microtubules and promotes chromosome alignment. The protein is Dual specificity protein kinase TTK (TTK) of Macaca fascicularis (Crab-eating macaque).